Reading from the N-terminus, the 469-residue chain is ATP synthase subunit beta (469 aa).

153-160 (GGAGVGKT) provides a ligand contact to ATP.

The protein belongs to the ATPase alpha/beta chains family. As to quaternary structure, F-type ATPases have 2 components, CF(1) - the catalytic core - and CF(0) - the membrane proton channel. CF(1) has five subunits: alpha(3), beta(3), gamma(1), delta(1), epsilon(1). CF(0) has three main subunits: a(1), b(2) and c(9-12). The alpha and beta chains form an alternating ring which encloses part of the gamma chain. CF(1) is attached to CF(0) by a central stalk formed by the gamma and epsilon chains, while a peripheral stalk is formed by the delta and b chains.

The protein localises to the cell membrane. The catalysed reaction is ATP + H2O + 4 H(+)(in) = ADP + phosphate + 5 H(+)(out). Its function is as follows. Produces ATP from ADP in the presence of a proton gradient across the membrane. The catalytic sites are hosted primarily by the beta subunits. The chain is ATP synthase subunit beta from Pediococcus pentosaceus (strain ATCC 25745 / CCUG 21536 / LMG 10740 / 183-1w).